The sequence spans 178 residues: Crossover junction endodeoxyribonuclease RuvC (178 aa).

Active-site residues include Asp18, Glu78, and Asp150. 3 residues coordinate Mg(2+): Asp18, Glu78, and Asp150.

It belongs to the RuvC family. In terms of assembly, homodimer which binds Holliday junction (HJ) DNA. The HJ becomes 2-fold symmetrical on binding to RuvC with unstacked arms; it has a different conformation from HJ DNA in complex with RuvA. In the full resolvosome a probable DNA-RuvA(4)-RuvB(12)-RuvC(2) complex forms which resolves the HJ. Mg(2+) is required as a cofactor.

The protein resides in the cytoplasm. The catalysed reaction is Endonucleolytic cleavage at a junction such as a reciprocal single-stranded crossover between two homologous DNA duplexes (Holliday junction).. In terms of biological role, the RuvA-RuvB-RuvC complex processes Holliday junction (HJ) DNA during genetic recombination and DNA repair. Endonuclease that resolves HJ intermediates. Cleaves cruciform DNA by making single-stranded nicks across the HJ at symmetrical positions within the homologous arms, yielding a 5'-phosphate and a 3'-hydroxyl group; requires a central core of homology in the junction. The consensus cleavage sequence is 5'-(A/T)TT(C/G)-3'. Cleavage occurs on the 3'-side of the TT dinucleotide at the point of strand exchange. HJ branch migration catalyzed by RuvA-RuvB allows RuvC to scan DNA until it finds its consensus sequence, where it cleaves and resolves the cruciform DNA. This is Crossover junction endodeoxyribonuclease RuvC from Granulibacter bethesdensis (strain ATCC BAA-1260 / CGDNIH1).